Reading from the N-terminus, the 376-residue chain is Glutamate 5-kinase (376 aa).

Position 15 (K15) interacts with ATP. Residues S56, D143, and N155 each coordinate substrate. S175–D176 lines the ATP pocket. One can recognise a PUA domain in the interval K281 to T358.

This sequence belongs to the glutamate 5-kinase family.

The protein resides in the cytoplasm. The catalysed reaction is L-glutamate + ATP = L-glutamyl 5-phosphate + ADP. It participates in amino-acid biosynthesis; L-proline biosynthesis; L-glutamate 5-semialdehyde from L-glutamate: step 1/2. Its function is as follows. Catalyzes the transfer of a phosphate group to glutamate to form L-glutamate 5-phosphate. The sequence is that of Glutamate 5-kinase from Rhodopseudomonas palustris (strain TIE-1).